We begin with the raw amino-acid sequence, 264 residues long: Small ribosomal subunit protein eS1 (264 aa).

The interval G233 to V264 is disordered. Residues A242 to G255 show a composition bias toward basic and acidic residues.

The protein belongs to the eukaryotic ribosomal protein eS1 family. Component of the small ribosomal subunit. Mature ribosomes consist of a small (40S) and a large (60S) subunit. The 40S subunit contains about 33 different proteins and 1 molecule of RNA (18S). The 60S subunit contains about 49 different proteins and 3 molecules of RNA (28S, 5.8S and 5S). Part of the small subunit (SSU) processome, composed of more than 70 proteins and the RNA chaperone small nucleolar RNA (snoRNA) U3.

It localises to the cytoplasm. It is found in the nucleus. The protein resides in the nucleolus. In terms of biological role, component of the small ribosomal subunit. The ribosome is a large ribonucleoprotein complex responsible for the synthesis of proteins in the cell. Part of the small subunit (SSU) processome, first precursor of the small eukaryotic ribosomal subunit. During the assembly of the SSU processome in the nucleolus, many ribosome biogenesis factors, an RNA chaperone and ribosomal proteins associate with the nascent pre-rRNA and work in concert to generate RNA folding, modifications, rearrangements and cleavage as well as targeted degradation of pre-ribosomal RNA by the RNA exosome. May play a role during erythropoiesis. In Xenopus tropicalis (Western clawed frog), this protein is Small ribosomal subunit protein eS1 (rps3a).